The following is a 179-amino-acid chain: Large ribosomal subunit protein uL6 (179 aa).

The protein belongs to the universal ribosomal protein uL6 family. As to quaternary structure, part of the 50S ribosomal subunit.

Its function is as follows. This protein binds to the 23S rRNA, and is important in its secondary structure. It is located near the subunit interface in the base of the L7/L12 stalk, and near the tRNA binding site of the peptidyltransferase center. This is Large ribosomal subunit protein uL6 from Pseudomonas savastanoi pv. phaseolicola (strain 1448A / Race 6) (Pseudomonas syringae pv. phaseolicola (strain 1448A / Race 6)).